A 385-amino-acid chain; its full sequence is WD repeat-containing protein RUP1 (385 aa).

7 WD repeats span residues 69 to 108, 119 to 160, 163 to 205, 210 to 250, 254 to 292, 298 to 337, and 348 to 385; these read TGSD…ESRD, CTPA…PVSE, EHGG…TLEE, GGGA…DPLI, GHTK…RVVR, VNSR…PVWV, and SDRR…GKQS.

In terms of assembly, interacts with UVR8. Interacts directly with DHU1.

It is found in the nucleus. It localises to the cytoplasm. Its subcellular location is the cytosol. In terms of biological role, functions in association with RUP2 as repressor of UV-B-induced photomorphogenesis mediated by UVR8 and HY5, likely in coordination with DHU1. Plays a crucial negative feedback regulatory role downstream of UVR8-COP1 to inhibit UVR8 function, balance UV-B-specific responses and ensure normal plant growth. Is involved in the regulation of photoperiodic flowering and vegetative development. The sequence is that of WD repeat-containing protein RUP1 from Arabidopsis thaliana (Mouse-ear cress).